The chain runs to 100 residues: Defensin-B4 (100 aa).

The first 22 residues, 1-22 (MRASLLLFILLVYLAHAPQAQG), serve as a signal peptide directing secretion. Positions 23–26 (VFGP) are excised as a propeptide. 3 disulfide bridges follow: Cys-29-Cys-56, Cys-36-Cys-50, and Cys-40-Cys-57. Residues 60–100 (STGTSSSQGSHEVPVINSEPALESKPEPQDTQEEEATMVSE) are disordered. A compositionally biased stretch (acidic residues) spans 89–100 (DTQEEEATMVSE).

Belongs to the beta-defensin family. As to expression, highly expressed in kidney, lowly expressed in spleen, and expressed at lower levels in lung.

The protein resides in the secreted. Has antimicrobial activity. The chain is Defensin-B4 from Ornithorhynchus anatinus (Duckbill platypus).